An 87-amino-acid polypeptide reads, in one-letter code: Xibalbin-2 (87 aa).

An N-terminal signal peptide occupies residues 1-25 (MKGVCTRKVLYFFMAVILFVAIVAS). Residues 26–45 (EDTENRNPAMAMPLQRMEQE) constitute a propeptide that is removed on maturation.

The protein belongs to the xibalbin-2 family. In terms of processing, contains 5 disulfide bonds. As to expression, expressed by the venom gland. Not found in the whole body.

It localises to the secreted. Probable neurotoxin. Moderately inhibits voltage-gated potassium channels (Kv1.1/KCNA1, Kv1.2/KCNA2, Kv1.3/KCNA3, and Kv1.6/KCNA6, with the highest toxicity against Kv1.6 (73.2% inhibition at 1 uM)) and weakly inhibits sodium channels (Nav1.4/SCN4A). Does not activate protein kinase A type II (PKA-II) and MAP kinase Erk1/2 in sensory neurons. Does not show cytotoxic activity. Does not have an impact on Ca2+, cAMP, and NO signaling in the cell types analyzed. Does not interfere with the adhesion of leukocytes to endothelial cells. Its function is as follows. Moderately inhibits voltage-gated potassium channels (Kv1.1/KCNA1, Kv1.2/KCNA2, Kv1.3/KCNA3, and Kv1.6/KCNA6, with the highest toxicity against Kv1.6 (75.9% inhibition at 1 uM)). Does not activate protein kinase A type II (PKA-II) and MAP kinase Erk1/2 in sensory neurons. Does not show cytotoxic activity. Does not have an impact on Ca2+, cAMP, and NO signaling in the cell types analyzed. Does not interfere with the adhesion of leukocytes to endothelial cells. This Xibalbanus tulumensis (Blind cave remipede) protein is Xibalbin-2.